The sequence spans 413 residues: ATP phosphoribosyltransferase 2, chloroplastic (413 aa).

A chloroplast-targeting transit peptide spans 1–57 (MPISIPLNATLQYSSPSSSSSSSSLVPSSPLFSPIPSTTVSLTGIRQRCLRMVTSCV).

This sequence belongs to the ATP phosphoribosyltransferase family. Long subfamily. Mg(2+) serves as cofactor.

It is found in the plastid. It localises to the chloroplast. The enzyme catalyses 1-(5-phospho-beta-D-ribosyl)-ATP + diphosphate = 5-phospho-alpha-D-ribose 1-diphosphate + ATP. It participates in amino-acid biosynthesis; L-histidine biosynthesis; L-histidine from 5-phospho-alpha-D-ribose 1-diphosphate: step 1/9. Feedback inhibited by L-histidine. Catalyzes the condensation of ATP and 5-phosphoribose 1-diphosphate to form N'-(5'-phosphoribosyl)-ATP (PR-ATP). The polypeptide is ATP phosphoribosyltransferase 2, chloroplastic (HISN1B) (Arabidopsis thaliana (Mouse-ear cress)).